Here is a 224-residue protein sequence, read N- to C-terminus: Inhibitor of apoptosis protein (224 aa).

A BIR repeat occupies 29–92; the sequence is VDARNQSFAI…AFWSRNCGFM (64 aa). Zn(2+) contacts are provided by cysteine 62, cysteine 65, histidine 82, and cysteine 89.

Belongs to the asfivirus IAP family. As to quaternary structure, interacts with subunit p17 of host CASP3.

It localises to the host cytoplasm. It is found in the virion. Prevents apoptosis of host cell by inhibiting caspase-3/CASP3 activation to promote the viral replication. Also induces the activation of host NF-kappaB. The sequence is that of Inhibitor of apoptosis protein (p27) from African swine fever virus (isolate Tick/South Africa/Wildebeeslaagte M1/1996) (ASFV).